The following is a 576-amino-acid chain: Vesicular glutamate transporter 1 (576 aa).

Topologically, residues M1–Y63 are cytoplasmic. Residues I64–G84 traverse the membrane as a helical segment. Over V85 to V116 the chain is Vesicular. The N-linked (GlcNAc...) asparagine glycan is linked to N93. The helical transmembrane segment at G117–I137 threads the bilayer. The Cytoplasmic portion of the chain corresponds to C138–K140. A helical membrane pass occupies residues F141–I161. Residues P162–H168 are Vesicular-facing. The chain crosses the membrane as a helical span at residues F169–A189. Residues C190–T208 lie on the Cytoplasmic side of the membrane. The chain crosses the membrane as a helical span at residues T209 to V229. At Q230–S236 the chain is on the vesicular side. The chain crosses the membrane as a helical span at residues V237–Y257. Residues E258–M302 lie on the Cytoplasmic side of the membrane. A helical membrane pass occupies residues P303 to I323. At S324–G341 the chain is on the vesicular side. A helical transmembrane segment spans residues L342–A362. Residues D363–K378 are Cytoplasmic-facing. The helical transmembrane segment at M379–H399 threads the bilayer. Topologically, residues S400–R401 are vesicular. Residues G402 to F422 traverse the membrane as a helical segment. Over N423–S435 the chain is Cytoplasmic. A helical membrane pass occupies residues I436–V456. Residues G457–Q469 lie on the Vesicular side of the membrane. A helical transmembrane segment spans residues Y470–A490. Over S491–S576 the chain is Cytoplasmic. Residues A517–T547 form a disordered region. Residues G534–G545 show a composition bias toward polar residues.

The protein belongs to the major facilitator superfamily. Sodium/anion cotransporter family. VGLUT subfamily.

It is found in the cytoplasmic vesicle. It localises to the secretory vesicle. Its subcellular location is the synaptic vesicle membrane. The protein resides in the cell membrane. The protein localises to the synapse. It is found in the synaptosome. The enzyme catalyses L-glutamate(out) = L-glutamate(in). The catalysed reaction is chloride(in) = chloride(out). It catalyses the reaction 3 Na(+)(out) + phosphate(out) = 3 Na(+)(in) + phosphate(in). It carries out the reaction phosphate(in) = phosphate(out). The enzyme catalyses K(+)(in) + H(+)(out) = K(+)(out) + H(+)(in). Chloride channel activity is allosterically activated by lumenal H(+) and Cl(-) leading to synaptic vesicles acidification. The L-glutamate transport activity is allosterically activated by lumenal H(+) and Cl(-). The allosteric activation by H(+) efficiently prevents non-vesicular efflux across the plasma membrane, thereby restricting L-glutamate transport activity to acidic membranes such as synaptic vesicles. In terms of biological role, multifunctional transporter that transports L-glutamate as well as multiple ions such as chloride, proton, potassium, sodium and phosphate. At the synaptic vesicle membrane, mainly functions as an uniporter which transports preferentially L-glutamate but also phosphate from the cytoplasm into synaptic vesicles at presynaptic nerve terminals of excitatory neural cells. The L-glutamate or phosphate uniporter activity is electrogenic and is driven by the proton electrochemical gradient, mainly by the electrical gradient established by the vacuolar H(+)-ATPase across the synaptic vesicle membrane. In addition, functions as a chloride channel that allows a chloride permeation through the synaptic vesicle membrane that affects the proton electrochemical gradient and promotes synaptic vesicles acidification. Moreover, may function as a K(+)/H(+) antiport allowing to maintain the electrical gradient and to decrease chemical gradient and therefore sustain vesicular glutamate uptake. The vesicular K(+)/H(+) antiport activity is electroneutral. At the plasma membrane, following exocytosis, functions as a symporter of Na(+) and phosphate from the extracellular space to the cytoplasm allowing synaptic phosphate homeostasis regulation. The symporter activity is driven by an inside negative membrane potential and is electrogenic. Is necessary for synaptic signaling of visual-evoked responses from photoreceptors. The sequence is that of Vesicular glutamate transporter 1 from Xenopus tropicalis (Western clawed frog).